A 69-amino-acid chain; its full sequence is Putative defensin-like protein 312 (69 aa).

Residues 1 to 19 form the signal peptide; that stretch reads MSCFSFLVYFLLFIVTKMS. Cysteines 45 and 57 form a disulfide.

It belongs to the DEFL family.

The protein localises to the secreted. This is Putative defensin-like protein 312 from Arabidopsis thaliana (Mouse-ear cress).